The sequence spans 292 residues: Protein sarah (292 aa).

Low complexity predominate over residues 1-51 (MSDAAKSNNNASADAPDPTTPDATGEADAANAATPTTPRGNHNNNNSANGR). A disordered region spans residues 1-111 (MSDAAKSNNN…TEPEVDADSF (111 aa)). A phosphoserine mark is found at Ser67, Ser72, and Ser100. The segment covering 98–111 (VDSDTEPEVDADSF) has biased composition (acidic residues). A phosphothreonine mark is found at Thr102 and Thr196. 2 positions are modified to phosphoserine: Ser215 and Ser219. The residue at position 246 (Thr246) is a Phosphothreonine.

Belongs to the RCAN family. As to quaternary structure, interacts with Pp2B-14D, CanA-14F and CanB2. In terms of processing, phosphorylation at Ser-215 and Ser-219 is essential for calcineurin activation and completion of female meiosis. Sgg is required for phosphorylation of Ser-215 in activated eggs. Ser-100, Thr-102 and Ser-219 are highly phosphorylated in both ovaries and activated eggs; however, phosphorylation at Ser-100 or Thr-102 is not required for sra function in completion of female meiosis. In terms of tissue distribution, expressed in central nervous system of the third instar larvae, with a relatively intense signal in the brain and weak signals in the ventral ganglion. Relatively low, but ubiquitous expression level is observed in leg and wing imaginal disks, no signal is detected in the eye-antennal disks. Expressed in all neurons in the adult brain.

In terms of biological role, required for elongation of meiosis I spindle. Critical for ovulation, meiotic progression in oocytes and female courtship behavior, including their postmating changes. Regulates female meiosis by controlling calcineurin activity in the germline. Has a role in calcium signaling during egg activation; bcd mRNA polyadenylation and translation in the oocyte. The protein is Protein sarah (sra) of Drosophila melanogaster (Fruit fly).